The chain runs to 430 residues: Protein trichome birefringence-like 24 (430 aa).

A helical; Signal-anchor for type II membrane protein membrane pass occupies residues 15–35 (VLLIKLISAILISFFAFRLFI). The short motif at 153–155 (GDS) is the GDS motif element. Positions 406-420 (DCLHWCLPGPFDYLN) match the DCXHWCLPGXXDXWN motif motif.

Belongs to the PC-esterase family. TBL subfamily.

The protein resides in the membrane. Functionally, may act as a bridging protein that binds pectin and other cell wall polysaccharides. Probably involved in maintaining esterification of pectins. May be involved in the specific O-acetylation of cell wall polymers. The sequence is that of Protein trichome birefringence-like 24 (TBL24) from Arabidopsis thaliana (Mouse-ear cress).